The primary structure comprises 360 residues: Thiol protease SEN102 (360 aa).

Residues 1–20 (MAKPKFIALALVALSFLSIA) form the signal peptide. A propeptide spans 21–133 (QSIPFTEKDL…ENVGSLPAAS (113 aa)) (activation peptide). 3 disulfides stabilise this stretch: Cys151-Cys193, Cys185-Cys225, and Cys283-Cys335. The active site involves Cys154. Residues His289 and Asn310 contribute to the active site. N-linked (GlcNAc...) asparagine glycosylation occurs at Asn353. The short motif at 357–360 (RDEL) is the Prevents secretion from ER element.

Belongs to the peptidase C1 family.

The protein resides in the endoplasmic reticulum lumen. The polypeptide is Thiol protease SEN102 (SEN102) (Hemerocallis sp. (Daylily)).